A 612-amino-acid chain; its full sequence is T-cell immunomodulatory protein (612 aa).

Residues 1–33 (MAAAGRLPSSWALFSPLLAGLALLGVGPVPARA) form the signal peptide. Asparagine 36, asparagine 95, asparagine 139, asparagine 146, asparagine 151, asparagine 176, asparagine 188, asparagine 226, and asparagine 243 each carry an N-linked (GlcNAc...) asparagine glycan. Residues 258-293 (VVGQSAFADFDGDGHMDHLLPGCEDKNCQKSTIYLV) form an FG-GAP; atypical repeat. Residues asparagine 353, asparagine 371, and asparagine 482 are each glycosylated (N-linked (GlcNAc...) asparagine). Residues 567–587 (VLLTAIALIGVCVFILAIIGI) traverse the membrane as a helical segment.

Belongs to the TIP family. In terms of assembly, interacts with RUVBL1, RUVBL2 and alpha-tubulin. As to expression, ubiquitously expressed.

Its subcellular location is the secreted. The protein resides in the membrane. In terms of biological role, modulator of T-cell function. Has a protective effect in graft versus host disease model. The chain is T-cell immunomodulatory protein from Homo sapiens (Human).